A 205-amino-acid chain; its full sequence is Protein-L-isoaspartate O-methyltransferase (205 aa).

Residue Ser56 is part of the active site.

The protein belongs to the methyltransferase superfamily. L-isoaspartyl/D-aspartyl protein methyltransferase family.

The protein localises to the cytoplasm. It catalyses the reaction [protein]-L-isoaspartate + S-adenosyl-L-methionine = [protein]-L-isoaspartate alpha-methyl ester + S-adenosyl-L-homocysteine. Its function is as follows. Catalyzes the methyl esterification of L-isoaspartyl residues in peptides and proteins that result from spontaneous decomposition of normal L-aspartyl and L-asparaginyl residues. It plays a role in the repair and/or degradation of damaged proteins. In Aeromonas salmonicida (strain A449), this protein is Protein-L-isoaspartate O-methyltransferase.